Consider the following 613-residue polypeptide: Zinc metalloproteinase-disintegrin-like MTP4 (613 aa).

The first 20 residues, 1 to 20 (MIEVLLVTICFTVFPYQGSS), serve as a signal peptide directing secretion. The propeptide occupies 21–191 (IILESGNVND…DEPIEKISQL (171 aa)). Positions 205-401 (KYIELYVVVD…VRPQCILNKP (197 aa)) constitute a Peptidase M12B domain. Ca(2+) is bound at residue Glu-208. Residue Asn-282 is glycosylated (N-linked (GlcNAc...) asparagine). Asp-292 is a binding site for Ca(2+). Disulfide bonds link Cys-316–Cys-396, Cys-356–Cys-380, and Cys-358–Cys-363. The Zn(2+) site is built by His-341, His-345, and His-351. Ca(2+)-binding residues include Cys-396, Asn-399, Asn-414, Phe-416, Glu-418, Glu-421, and Asp-424. The region spanning 409–495 (PPVCGNYFVE…KCPTDSFQRN (87 aa)) is the Disintegrin domain. 15 disulfides stabilise this stretch: Cys-412-Cys-441, Cys-423-Cys-436, Cys-425-Cys-431, Cys-435-Cys-458, Cys-449-Cys-455, Cys-454-Cys-480, Cys-467-Cys-487, Cys-474-Cys-506, Cys-499-Cys-511, Cys-518-Cys-568, Cys-533-Cys-575, Cys-543-Cys-577, Cys-546-Cys-556, Cys-563-Cys-601, and Cys-595-Cys-606. N-linked (GlcNAc...) asparagine glycosylation occurs at Asn-437. The D/ECD-tripeptide motif lies at 473-475 (DCD). Ca(2+)-binding residues include Asp-475, Leu-476, Glu-478, and Asp-490. The segment at 561–574 (KMCGKLLCEKGNAT) is hypervariable region that may play important roles toward cell migration. The N-linked (GlcNAc...) asparagine glycan is linked to Asn-572.

It belongs to the venom metalloproteinase (M12B) family. P-III subfamily. As to quaternary structure, monomer. Zn(2+) serves as cofactor. Expressed by the venom gland.

It localises to the secreted. Functionally, snake venom zinc metalloproteinase that may impair hemostasis in the prey. The chain is Zinc metalloproteinase-disintegrin-like MTP4 from Drysdalia coronoides (White-lipped snake).